The primary structure comprises 333 residues: Serine/threonine-protein phosphatase 4 catalytic subunit 1 (333 aa).

A disordered region spans residues Met1–Thr29. Positions Asp7–Leu27 are enriched in polar residues. Mn(2+) contacts are provided by Asp79, His81, Asp107, and Asn139. The Proton donor role is filled by His140. Residues His189 and His264 each coordinate Mn(2+). At Leu333 the chain carries Leucine methyl ester.

It belongs to the PPP phosphatase family. PP-4 (PP-X) subfamily. In terms of assembly, serine/threonine-protein phosphatase 4 (PP4) occurs in different assemblies of the catalytic and one or more regulatory subunits. The regulatory subunits are likely to be ppfr-1, ppfr-2, ppfr-4 and smk-1. Interacts with mei-1. Mn(2+) serves as cofactor. Post-translationally, methylation at the C-terminal Leu-333 is critical for interactions with regulatory subunits.

The protein resides in the cytoplasm. It localises to the cytoskeleton. Its subcellular location is the microtubule organizing center. It is found in the centrosome. It carries out the reaction O-phospho-L-seryl-[protein] + H2O = L-seryl-[protein] + phosphate. The catalysed reaction is O-phospho-L-threonyl-[protein] + H2O = L-threonyl-[protein] + phosphate. In terms of biological role, protein phosphatase which plays an essential role in meiosis and in early embryonic mitosis. During spermatocyte meiosis and the first embryonic mitosis, regulates centrosome maturation, and thus spindle formation, by recruiting some of the components of the pericentriolar material (PCM). During oocyte meiosis I, regulates meiotic chromosome dynamics including synapsis-independent chromosome pairing, restriction of synapsis to homologous chromosomes, programmed DNA double-strand break initiation and crossover formation resulting in chiasma formation. During oocyte meiosis II and probably together with regulatory subunit ppfr-1, may regulate microtubule severing by dephosphorylating and activating mei-1, a component of the katanin microtubule severing complex. This is Serine/threonine-protein phosphatase 4 catalytic subunit 1 (pph-4.1) from Caenorhabditis briggsae.